Reading from the N-terminus, the 513-residue chain is Putative thymidine phosphorylase (513 aa).

This sequence belongs to the thymidine/pyrimidine-nucleoside phosphorylase family. Type 2 subfamily.

It carries out the reaction thymidine + phosphate = 2-deoxy-alpha-D-ribose 1-phosphate + thymine. This chain is Putative thymidine phosphorylase, found in Bradyrhizobium diazoefficiens (strain JCM 10833 / BCRC 13528 / IAM 13628 / NBRC 14792 / USDA 110).